Consider the following 336-residue polypeptide: D-altritol 5-dehydrogenase (336 aa).

Zn(2+)-binding residues include Cys-37, His-59, Glu-60, Cys-89, Cys-92, Cys-95, and Cys-103.

It belongs to the zinc-containing alcohol dehydrogenase family. It depends on Zn(2+) as a cofactor.

It carries out the reaction D-altritol + NAD(+) = keto-D-tagatose + NADH + H(+). Its pathway is carbohydrate metabolism. Functionally, involved in D-altritol catabolism. Catalyzes the oxidation of D-altritol to D-tagatose. The polypeptide is D-altritol 5-dehydrogenase (Agrobacterium fabrum (strain C58 / ATCC 33970) (Agrobacterium tumefaciens (strain C58))).